We begin with the raw amino-acid sequence, 311 residues long: Fructose-1,6-bisphosphatase class 1 (311 aa).

Residues glutamate 90, aspartate 110, leucine 112, and aspartate 113 each coordinate Mg(2+). Residues aspartate 113 to serine 116, tyrosine 221, and lysine 251 contribute to the substrate site. Glutamate 257 serves as a coordination point for Mg(2+).

It belongs to the FBPase class 1 family. Homotetramer. The cofactor is Mg(2+).

The protein resides in the cytoplasm. The catalysed reaction is beta-D-fructose 1,6-bisphosphate + H2O = beta-D-fructose 6-phosphate + phosphate. Its pathway is carbohydrate biosynthesis; gluconeogenesis. In Methanospirillum hungatei JF-1 (strain ATCC 27890 / DSM 864 / NBRC 100397 / JF-1), this protein is Fructose-1,6-bisphosphatase class 1.